The sequence spans 303 residues: Pyridoxal 5'-phosphate synthase subunit PdxS (303 aa).

D33 contributes to the D-ribose 5-phosphate binding site. The active-site Schiff-base intermediate with D-ribose 5-phosphate is the K90. A D-ribose 5-phosphate-binding site is contributed by G162. R174 contacts D-glyceraldehyde 3-phosphate. Residues G223 and 244-245 (GS) contribute to the D-ribose 5-phosphate site.

Belongs to the PdxS/SNZ family. In the presence of PdxT, forms a dodecamer of heterodimers.

The enzyme catalyses aldehydo-D-ribose 5-phosphate + D-glyceraldehyde 3-phosphate + L-glutamine = pyridoxal 5'-phosphate + L-glutamate + phosphate + 3 H2O + H(+). The protein operates within cofactor biosynthesis; pyridoxal 5'-phosphate biosynthesis. Its function is as follows. Catalyzes the formation of pyridoxal 5'-phosphate from ribose 5-phosphate (RBP), glyceraldehyde 3-phosphate (G3P) and ammonia. The ammonia is provided by the PdxT subunit. Can also use ribulose 5-phosphate and dihydroxyacetone phosphate as substrates, resulting from enzyme-catalyzed isomerization of RBP and G3P, respectively. This chain is Pyridoxal 5'-phosphate synthase subunit PdxS, found in Mycobacterium avium (strain 104).